We begin with the raw amino-acid sequence, 537 residues long: Mitochondria-eating protein (537 aa).

The interval 1 to 273 (MADNLRRLVS…PCSRSHSRSR (273 aa)) is interaction with YWHAG/14-3-3 protein gamma. Ser-85, Ser-127, Ser-154, and Ser-157 each carry phosphoserine. The stretch at 115-253 (GTRDIQQLDA…SAEKSVLQGR (139 aa)) forms a coiled coil. Disordered stretches follow at residues 171–221 (QLKS…ANQR) and 249–293 (VLQG…AKLS). Over residues 179-217 (EESRHRNSDRRRSEKRGSERRRVELRGSEQRVSDLDRRS) the composition is skewed to basic and acidic residues. The span at 253–287 (RSARSRSPSPAPCSRSHSRSRSTSPSSAKARTPSP) shows a compositional bias: low complexity. A phosphoserine mark is found at Ser-286 and Ser-508.

It belongs to the MIEAP family. In terms of assembly, interacts (via coiled-coil domains) with BNIP3L (via BH3 domain). Interacts (via coiled-coil domains) with BNIP3 (via BH3 domain). Interacts with YWHAG/14-3-3 protein gamma; a protein that also plays a role in MALM.

The protein resides in the cytoplasm. Its subcellular location is the cytosol. It is found in the mitochondrion outer membrane. It localises to the mitochondrion matrix. Key regulator of mitochondrial quality that mediates the repairing or degradation of unhealthy mitochondria in response to mitochondrial damage. Mediator of mitochondrial protein catabolic process (also named MALM) by mediating the degradation of damaged proteins inside mitochondria by promoting the accumulation in the mitochondrial matrix of hydrolases that are characteristic of the lysosomal lumen. Also involved in mitochondrion degradation of damaged mitochondria by promoting the formation of vacuole-like structures (named MIV), which engulf and degrade unhealthy mitochondria by accumulating lysosomes. The physical interaction of SPATA18/MIEAP, BNIP3 and BNIP3L/NIX at the mitochondrial outer membrane regulates the opening of a pore in the mitochondrial double membrane in order to mediate the translocation of lysosomal proteins from the cytoplasm to the mitochondrial matrix. Binds cardiolipin. May form molecular condensates (non-membrane-bounded organelles) within mitochondria that compartmentalize and promote cardiolipin metabolism. This Bos taurus (Bovine) protein is Mitochondria-eating protein (SPATA18).